Here is a 295-residue protein sequence, read N- to C-terminus: Protoheme IX farnesyltransferase (295 aa).

9 helical membrane passes run 9–29 (ITKPGIIFGNVLSVAGGFFLA), 36–56 (FGVFLAAVIGTSLVVASGCVF), 80–100 (LVSLKLALLYATLLGIAGVGL), 108–128 (LAALFAVIGFVIYVGLYSLYL), 135–155 (GTLVGSLSGAMPPVIGYCAVS), 163–183 (LTLLVMFSLWQMPHSYAIAIF), 209–229 (IMLYILAFLVATLMLTVGGYA), 230–250 (GLNYLAVAAGMGMYWLYMAWK), and 265–285 (FVFSIFTITALSVMMSVDFQV).

It belongs to the UbiA prenyltransferase family. Protoheme IX farnesyltransferase subfamily.

It is found in the cell inner membrane. The catalysed reaction is heme b + (2E,6E)-farnesyl diphosphate + H2O = Fe(II)-heme o + diphosphate. It participates in porphyrin-containing compound metabolism; heme O biosynthesis; heme O from protoheme: step 1/1. Functionally, converts heme B (protoheme IX) to heme O by substitution of the vinyl group on carbon 2 of heme B porphyrin ring with a hydroxyethyl farnesyl side group. The chain is Protoheme IX farnesyltransferase from Pseudomonas syringae pv. syringae (strain B728a).